The following is a 382-amino-acid chain: MELFPVAVNGVSHAEDPFSGPLTFIAPWNYKVLATLMFVVTAASLSENFAVMLVTFRFTQLRKPLNYIIVNLSLADFLVSLTGGTISFLTNYHGYFFLGKWACVLEGFAVTYFGIVALWSLAVLAFERFFVICRPLGNIRLRGKHAALGLLFVWTFSFIWTIPPVLGWSSYTVSKIGTTCEPNWYSGNFHDHTFIIAFFITCFILPLGVIVVCYCKLIKKLRKVSNTHGRLGNARKPERQVTRMVVVMIVAFMVAWTPYAAFSIVVTAHPSIHLDPRLAAAPAFFSKTAAVYNPVIYVFMNKQFRKCLVQLLRCRDVTIIEGNINQTSERQGMTNESHTGEMSTIASRIPKDGSIPEKTQEHPGERRSLAHIPIPENKVCPM.

At 1–35 (MELFPVAVNGVSHAEDPFSGPLTFIAPWNYKVLAT) the chain is on the extracellular side. A helical transmembrane segment spans residues 36–56 (LMFVVTAASLSENFAVMLVTF). The Cytoplasmic portion of the chain corresponds to 57–67 (RFTQLRKPLNY). A helical membrane pass occupies residues 68–88 (IIVNLSLADFLVSLTGGTISF). The Extracellular portion of the chain corresponds to 89 to 103 (LTNYHGYFFLGKWAC). A disulfide bond links Cys-103 and Cys-180. A helical transmembrane segment spans residues 104 to 124 (VLEGFAVTYFGIVALWSLAVL). The Cytoplasmic portion of the chain corresponds to 125-147 (AFERFFVICRPLGNIRLRGKHAA). A helical membrane pass occupies residues 148 to 168 (LGLLFVWTFSFIWTIPPVLGW). At 169–193 (SSYTVSKIGTTCEPNWYSGNFHDHT) the chain is on the extracellular side. The helical transmembrane segment at 194–214 (FIIAFFITCFILPLGVIVVCY) threads the bilayer. Over 215–244 (CKLIKKLRKVSNTHGRLGNARKPERQVTRM) the chain is Cytoplasmic. Residues 245 to 265 (VVVMIVAFMVAWTPYAAFSIV) form a helical membrane-spanning segment. Over 266-279 (VTAHPSIHLDPRLA) the chain is Extracellular. A helical membrane pass occupies residues 280-300 (AAPAFFSKTAAVYNPVIYVFM). Position 287 is an N6-(retinylidene)lysine (Lys-287). At 301 to 382 (NKQFRKCLVQ…PIPENKVCPM (82 aa)) the chain is on the cytoplasmic side. Residues 330 to 346 (RQGMTNESHTGEMSTIA) are compositionally biased toward polar residues. The disordered stretch occupies residues 330-371 (RQGMTNESHTGEMSTIASRIPKDGSIPEKTQEHPGERRSLAH). The segment covering 349-368 (IPKDGSIPEKTQEHPGERRS) has biased composition (basic and acidic residues).

The protein belongs to the G-protein coupled receptor 1 family. Opsin subfamily. Expressed in a subset of retinal horizontal cells as well as in retinal ganglion cells.

The protein resides in the membrane. The sequence is that of Opsin-VA from Rutilus rutilus (Roach).